Consider the following 218-residue polypeptide: MITRAELAAMVDHTLLKPESTAEQVAELAREAGELGTYSICVSPSRLDVELPEGVKLATVCGFPSGAHPSEVKAVEAADSVAQGADEVDMVINLGLAMDGDWDGVREDIEAVRAACPEPTVLKVIIESAALSDEQIVAACQAAEVAGADFVKTSTGFHPAGGASVEAVRLMAQTVGDRLGVKASGGIRTTEAALAMVEAGATRLGLSGTRSVLEGLDS.

Asp-89 functions as the Proton donor/acceptor in the catalytic mechanism. Lys-152 acts as the Schiff-base intermediate with acetaldehyde in catalysis. Residue Lys-182 is the Proton donor/acceptor of the active site.

The protein belongs to the DeoC/FbaB aldolase family. DeoC type 1 subfamily.

The protein resides in the cytoplasm. The catalysed reaction is 2-deoxy-D-ribose 5-phosphate = D-glyceraldehyde 3-phosphate + acetaldehyde. It participates in carbohydrate degradation; 2-deoxy-D-ribose 1-phosphate degradation; D-glyceraldehyde 3-phosphate and acetaldehyde from 2-deoxy-alpha-D-ribose 1-phosphate: step 2/2. Catalyzes a reversible aldol reaction between acetaldehyde and D-glyceraldehyde 3-phosphate to generate 2-deoxy-D-ribose 5-phosphate. This is Deoxyribose-phosphate aldolase from Kocuria rhizophila (strain ATCC 9341 / DSM 348 / NBRC 103217 / DC2201).